We begin with the raw amino-acid sequence, 221 residues long: 2-C-methyl-D-erythritol 4-phosphate cytidylyltransferase (221 aa).

It belongs to the IspD/TarI cytidylyltransferase family. IspD subfamily.

It carries out the reaction 2-C-methyl-D-erythritol 4-phosphate + CTP + H(+) = 4-CDP-2-C-methyl-D-erythritol + diphosphate. It functions in the pathway isoprenoid biosynthesis; isopentenyl diphosphate biosynthesis via DXP pathway; isopentenyl diphosphate from 1-deoxy-D-xylulose 5-phosphate: step 2/6. Catalyzes the formation of 4-diphosphocytidyl-2-C-methyl-D-erythritol from CTP and 2-C-methyl-D-erythritol 4-phosphate (MEP). This chain is 2-C-methyl-D-erythritol 4-phosphate cytidylyltransferase, found in Roseobacter denitrificans (strain ATCC 33942 / OCh 114) (Erythrobacter sp. (strain OCh 114)).